A 63-amino-acid chain; its full sequence is Large ribosomal subunit protein bL32 (63 aa).

This sequence belongs to the bacterial ribosomal protein bL32 family.

In Acholeplasma laidlawii, this protein is Large ribosomal subunit protein bL32.